The sequence spans 305 residues: Glycine--tRNA ligase alpha subunit (305 aa).

This sequence belongs to the class-II aminoacyl-tRNA synthetase family. In terms of assembly, tetramer of two alpha and two beta subunits.

Its subcellular location is the cytoplasm. It catalyses the reaction tRNA(Gly) + glycine + ATP = glycyl-tRNA(Gly) + AMP + diphosphate. In Vibrio cholerae serotype O1 (strain ATCC 39315 / El Tor Inaba N16961), this protein is Glycine--tRNA ligase alpha subunit (glyQ).